The following is a 402-amino-acid chain: Phosphoglycerate kinase (402 aa).

Substrate contacts are provided by residues 24–26 (DFN), Arg-40, 63–66 (HFGR), Arg-122, and Arg-155. Residues Lys-206, Gly-297, Glu-328, and 357–360 (GGDS) each bind ATP.

It belongs to the phosphoglycerate kinase family. Monomer.

The protein resides in the cytoplasm. It carries out the reaction (2R)-3-phosphoglycerate + ATP = (2R)-3-phospho-glyceroyl phosphate + ADP. It functions in the pathway carbohydrate degradation; glycolysis; pyruvate from D-glyceraldehyde 3-phosphate: step 2/5. The protein is Phosphoglycerate kinase of Synechococcus elongatus (strain ATCC 33912 / PCC 7942 / FACHB-805) (Anacystis nidulans R2).